Reading from the N-terminus, the 1089-residue chain is Platelet-derived growth factor receptor alpha (1089 aa).

The first 23 residues, methionine 1–cysteine 23, serve as a signal peptide directing secretion. 5 consecutive Ig-like C2-type domains span residues glutamine 24 to glutamate 113, isoleucine 117 to isoleucine 201, proline 202 to threonine 306, proline 319 to leucine 410, and proline 414 to valine 517. The Extracellular portion of the chain corresponds to glutamine 24–alanine 528. Residues asparagine 42, asparagine 76, asparagine 103, and asparagine 179 are each glycosylated (N-linked (GlcNAc...) asparagine). Cysteine 49 and cysteine 100 are joined by a disulfide. Cystine bridges form between cysteine 150–cysteine 189 and cysteine 235–cysteine 290. Residues asparagine 353, asparagine 359, asparagine 458, and asparagine 468 are each glycosylated (N-linked (GlcNAc...) asparagine). An intrachain disulfide couples cysteine 435 to cysteine 501. The helical transmembrane segment at alanine 529 to tryptophan 549 threads the bilayer. Residues lysine 550–leucine 1089 lie on the Cytoplasmic side of the membrane. 2 positions are modified to phosphotyrosine; by autocatalysis: tyrosine 572 and tyrosine 574. Positions leucine 593–leucine 954 constitute a Protein kinase domain. ATP-binding positions include leucine 599 to valine 607 and lysine 627. 6 positions are modified to phosphotyrosine; by autocatalysis: tyrosine 720, tyrosine 731, tyrosine 742, tyrosine 754, tyrosine 762, and tyrosine 768. Catalysis depends on aspartate 818, which acts as the Proton acceptor. Tyrosine 849, tyrosine 988, and tyrosine 1018 each carry phosphotyrosine; by autocatalysis. Residues tyrosine 1018–leucine 1089 form a disordered region. Polar residues predominate over residues serine 1041–phenylalanine 1059. Residues glutamate 1065–leucine 1089 are compositionally biased toward acidic residues.

Belongs to the protein kinase superfamily. Tyr protein kinase family. CSF-1/PDGF receptor subfamily. Interacts with homodimeric PDGFA, PDGFB and PDGFC, and with heterodimers formed by PDGFA and PDGFB. Monomer in the absence of bound ligand. Interaction with dimeric PDGFA, PDGFB and/or PDGFC leads to receptor dimerization, where both PDGFRA homodimers and heterodimers with PDGFRB are observed. Interacts (tyrosine phosphorylated) with SHB (via SH2 domain). Interacts (tyrosine phosphorylated) with SHF (via SH2 domain). Interacts (tyrosine phosphorylated) with SRC (via SH2 domain). Interacts (tyrosine phosphorylated) with PIK3R1. Interacts (tyrosine phosphorylated) with PLCG1 (via SH2 domain). Interacts (tyrosine phosphorylated) with CRK, GRB2 and GRB7. Interacts with CD248; this interaction promotes PDGF receptor signaling pathway. In terms of assembly, (Microbial infection) Interacts with human cytomegalovirus/HHV-5 envelope glycoprotein B/gB. Also interacts with the trimeric complex gH-gL-gO. Trimer-PDGFRA interaction has an inhibitory effect on PDGFRA signaling. In terms of processing, N-glycosylated. Post-translationally, ubiquitinated, leading to its internalization and degradation. Autophosphorylated on tyrosine residues upon ligand binding. Autophosphorylation occurs in trans, i.e. one subunit of the dimeric receptor phosphorylates tyrosine residues on the other subunit. Phosphorylation at Tyr-731 and Tyr-742 is important for interaction with PIK3R1. Phosphorylation at Tyr-720 and Tyr-754 is important for interaction with PTPN11. Phosphorylation at Tyr-762 is important for interaction with CRK. Phosphorylation at Tyr-572 and Tyr-574 is important for interaction with SRC and SRC family members. Phosphorylation at Tyr-988 and Tyr-1018 is important for interaction with PLCG1. As to expression, detected in platelets (at protein level). Widely expressed. Detected in brain, fibroblasts, smooth muscle, heart, and embryo. Expressed in primary and metastatic colon tumors and in normal colon tissue.

The protein resides in the cell membrane. It is found in the cell projection. It localises to the cilium. The protein localises to the golgi apparatus. It catalyses the reaction L-tyrosyl-[protein] + ATP = O-phospho-L-tyrosyl-[protein] + ADP + H(+). Present in an inactive conformation in the absence of bound ligand. Binding of PDGFA and/or PDGFB leads to dimerization and activation by autophosphorylation on tyrosine residues. Inhibited by imatinib, nilotinib and sorafenib. Its function is as follows. Tyrosine-protein kinase that acts as a cell-surface receptor for PDGFA, PDGFB and PDGFC and plays an essential role in the regulation of embryonic development, cell proliferation, survival and chemotaxis. Depending on the context, promotes or inhibits cell proliferation and cell migration. Plays an important role in the differentiation of bone marrow-derived mesenchymal stem cells. Required for normal skeleton development and cephalic closure during embryonic development. Required for normal development of the mucosa lining the gastrointestinal tract, and for recruitment of mesenchymal cells and normal development of intestinal villi. Plays a role in cell migration and chemotaxis in wound healing. Plays a role in platelet activation, secretion of agonists from platelet granules, and in thrombin-induced platelet aggregation. Binding of its cognate ligands - homodimeric PDGFA, homodimeric PDGFB, heterodimers formed by PDGFA and PDGFB or homodimeric PDGFC -leads to the activation of several signaling cascades; the response depends on the nature of the bound ligand and is modulated by the formation of heterodimers between PDGFRA and PDGFRB. Phosphorylates PIK3R1, PLCG1, and PTPN11. Activation of PLCG1 leads to the production of the cellular signaling molecules diacylglycerol and inositol 1,4,5-trisphosphate, mobilization of cytosolic Ca(2+) and the activation of protein kinase C. Phosphorylates PIK3R1, the regulatory subunit of phosphatidylinositol 3-kinase, and thereby mediates activation of the AKT1 signaling pathway. Mediates activation of HRAS and of the MAP kinases MAPK1/ERK2 and/or MAPK3/ERK1. Promotes activation of STAT family members STAT1, STAT3 and STAT5A and/or STAT5B. Receptor signaling is down-regulated by protein phosphatases that dephosphorylate the receptor and its down-stream effectors, and by rapid internalization of the activated receptor. The chain is Platelet-derived growth factor receptor alpha (PDGFRA) from Homo sapiens (Human).